We begin with the raw amino-acid sequence, 123 residues long: S-adenosylmethionine decarboxylase proenzyme 2 (123 aa).

The active-site Schiff-base intermediate with substrate; via pyruvic acid is Ser-65. Ser-65 is modified (pyruvic acid (Ser); by autocatalysis). The Proton acceptor; for processing activity role is filled by His-70. The active-site Proton donor; for catalytic activity is the Cys-85.

Belongs to the prokaryotic AdoMetDC family. Type 1 subfamily. In terms of assembly, heterotetramer of two alpha and two beta chains arranged as a dimer of alpha/beta heterodimers. Pyruvate is required as a cofactor. Is synthesized initially as an inactive proenzyme. Formation of the active enzyme involves a self-maturation process in which the active site pyruvoyl group is generated from an internal serine residue via an autocatalytic post-translational modification. Two non-identical subunits are generated from the proenzyme in this reaction, and the pyruvate is formed at the N-terminus of the alpha chain, which is derived from the carboxyl end of the proenzyme. The post-translation cleavage follows an unusual pathway, termed non-hydrolytic serinolysis, in which the side chain hydroxyl group of the serine supplies its oxygen atom to form the C-terminus of the beta chain, while the remainder of the serine residue undergoes an oxidative deamination to produce ammonia and the pyruvoyl group blocking the N-terminus of the alpha chain.

It carries out the reaction S-adenosyl-L-methionine + H(+) = S-adenosyl 3-(methylsulfanyl)propylamine + CO2. It functions in the pathway amine and polyamine biosynthesis; S-adenosylmethioninamine biosynthesis; S-adenosylmethioninamine from S-adenosyl-L-methionine: step 1/1. Catalyzes the decarboxylation of S-adenosylmethionine to S-adenosylmethioninamine (dcAdoMet), the propylamine donor required for the synthesis of the polyamines spermine and spermidine from the diamine putrescine. The protein is S-adenosylmethionine decarboxylase proenzyme 2 of Bacillus anthracis.